We begin with the raw amino-acid sequence, 682 residues long: DNA-directed RNA polymerase subunit beta' (682 aa).

Zn(2+) contacts are provided by C69, C71, C87, and C90. Mg(2+)-binding residues include D489, D491, and D493.

This sequence belongs to the RNA polymerase beta' chain family. RpoC1 subfamily. In terms of assembly, in plastids the minimal PEP RNA polymerase catalytic core is composed of four subunits: alpha, beta, beta', and beta''. When a (nuclear-encoded) sigma factor is associated with the core the holoenzyme is formed, which can initiate transcription. It depends on Mg(2+) as a cofactor. Zn(2+) is required as a cofactor.

It is found in the plastid. Its subcellular location is the chloroplast. It carries out the reaction RNA(n) + a ribonucleoside 5'-triphosphate = RNA(n+1) + diphosphate. Functionally, DNA-dependent RNA polymerase catalyzes the transcription of DNA into RNA using the four ribonucleoside triphosphates as substrates. This is DNA-directed RNA polymerase subunit beta' from Platanus occidentalis (Sycamore).